The primary structure comprises 508 residues: uncharacterized protein (508 aa).

Residues 3-163 (KAIAYMRFSS…LSWKKKRQDA (161 aa)) form the Resolvase/invertase-type recombinase catalytic domain. The active-site O-(5'-phospho-DNA)-serine intermediate is the serine 11. Positions 175-290 (PRWLSLDDKR…QEIRLAPFGI (116 aa)) form a DNA-binding region, recombinase.

This is an uncharacterized protein from Escherichia coli (strain K12).